The primary structure comprises 337 residues: tRNA N6-adenosine threonylcarbamoyltransferase (337 aa).

Residues His110 and His114 each contribute to the Fe cation site. Residues 133 to 137, Asp166, Gly179, and Asn271 contribute to the substrate site; that span reads LVSGK. Asp300 contacts Fe cation.

Belongs to the KAE1 / TsaD family. Requires Fe(2+) as cofactor.

It localises to the cytoplasm. It catalyses the reaction L-threonylcarbamoyladenylate + adenosine(37) in tRNA = N(6)-L-threonylcarbamoyladenosine(37) in tRNA + AMP + H(+). Required for the formation of a threonylcarbamoyl group on adenosine at position 37 (t(6)A37) in tRNAs that read codons beginning with adenine. Is involved in the transfer of the threonylcarbamoyl moiety of threonylcarbamoyl-AMP (TC-AMP) to the N6 group of A37, together with TsaE and TsaB. TsaD likely plays a direct catalytic role in this reaction. The polypeptide is tRNA N6-adenosine threonylcarbamoyltransferase (Buchnera aphidicola subsp. Schizaphis graminum (strain Sg)).